Here is a 280-residue protein sequence, read N- to C-terminus: Meiotic spindle formation protein 2 (280 aa).

The tract at residues 1–104 (MSGLDDRKKL…LPKSSPESSV (104 aa)) is disordered. Residues 72–92 (LHSESKKELSRNPVSRGEEHS) are compositionally biased toward basic and acidic residues. A compositionally biased stretch (low complexity) spans 93–104 (SSLPKSSPESSV).

Interacts with mei-1.

It localises to the cytoplasm. The protein localises to the cytoskeleton. The protein resides in the spindle pole. Its function is as follows. Forms a heterodimeric complex in conjunction with mei-1 which severs microtubules in vitro in an ATP-dependent manner. This activity may promote rapid reorganization of cellular microtubule arrays. May act to target mei-1 within the cell. Required specifically for meiotic spindle formation in the female germline. The sequence is that of Meiotic spindle formation protein 2 (mei-2) from Caenorhabditis elegans.